Reading from the N-terminus, the 366-residue chain is Mannonate dehydratase (366 aa).

This sequence belongs to the mannonate dehydratase family. Requires Fe(2+) as cofactor. Mn(2+) is required as a cofactor.

The enzyme catalyses D-mannonate = 2-dehydro-3-deoxy-D-gluconate + H2O. The protein operates within carbohydrate metabolism; pentose and glucuronate interconversion. In terms of biological role, catalyzes the dehydration of D-mannonate. This chain is Mannonate dehydratase, found in Streptococcus pneumoniae (strain 70585).